The following is a 219-amino-acid chain: Transcriptional regulatory protein QseB (219 aa).

The Response regulatory domain occupies 2 to 116 (RILLIEDDML…EVAARLEALM (115 aa)). The residue at position 51 (aspartate 51) is a 4-aspartylphosphate. The ompR/PhoB-type DNA-binding region spans 124-218 (SNELRHGNVM…VHGIGYTLGE (95 aa)).

In terms of processing, phosphorylated by QseC.

It localises to the cytoplasm. In terms of biological role, member of a two-component regulatory system QseB/QseC. Activates the flagella regulon by activating transcription of FlhDC. Currently it is not known whether this effect is direct or not. This Escherichia coli O157:H7 protein is Transcriptional regulatory protein QseB (qseB).